The following is a 322-amino-acid chain: Transaldolase (322 aa).

Lysine 132 functions as the Schiff-base intermediate with substrate in the catalytic mechanism.

It belongs to the transaldolase family. Type 1 subfamily. Homodimer.

It is found in the cytoplasm. The enzyme catalyses D-sedoheptulose 7-phosphate + D-glyceraldehyde 3-phosphate = D-erythrose 4-phosphate + beta-D-fructose 6-phosphate. It participates in carbohydrate degradation; pentose phosphate pathway; D-glyceraldehyde 3-phosphate and beta-D-fructose 6-phosphate from D-ribose 5-phosphate and D-xylulose 5-phosphate (non-oxidative stage): step 2/3. Its function is as follows. Transaldolase is important for the balance of metabolites in the pentose-phosphate pathway. The sequence is that of Transaldolase from Protochlamydia amoebophila (strain UWE25).